The following is a 479-amino-acid chain: Ammonium transporter Rh type C (479 aa).

Over 1–9 (MAWNTNLRW) the chain is Cytoplasmic. Residues 10 to 30 (RLPLTCLLLQVVMVILFGVFV) traverse the membrane as a helical segment. Topologically, residues 31–60 (RYDFEADAHWWSERTHKNLSDVENEFYYRY) are extracellular. N48 carries N-linked (GlcNAc...) asparagine glycosylation. A helical membrane pass occupies residues 61 to 81 (PSFQDVHVMVFVGFGFLMTFL). Residues 82–85 (QRYG) lie on the Cytoplasmic side of the membrane. Residues 86–106 (FSAVGFNFLLAAFGIQWALLM) form a helical membrane-spanning segment. The Extracellular portion of the chain corresponds to 107–123 (QGWFHFLQGRYIVVGVE). Residues 124–144 (NLINADFCVASVCVAFGAVLG) form a helical membrane-spanning segment. Residues 145–148 (KVSP) lie on the Cytoplasmic side of the membrane. The helical transmembrane segment at 149–169 (IQLLIMTFFQVTLFAVNEFIL) threads the bilayer. The Extracellular segment spans residues 170–177 (LNLLKVKD). A helical transmembrane segment spans residues 178-200 (AGGSMTIHTFGAYFGLTVTRILY). The Cytoplasmic segment spans residues 201 to 218 (RRNLEQSKERQNSVYQSD). The chain crosses the membrane as a helical span at residues 219–239 (LFAMIGTLFLWMYWPSFNSAI). Residues 240–250 (SYHGDSQHRAA) lie on the Extracellular side of the membrane. Residues 251–271 (INTYCSLAACVLTSVAISSAL) form a helical membrane-spanning segment. The Cytoplasmic segment spans residues 272 to 281 (HKKGKLDMVH). A helical membrane pass occupies residues 282 to 302 (IQNATLAGGVAVGTAAEMMLM). Position 303 (P303) is a topological domain, extracellular. The helical transmembrane segment at 304-324 (YGALIIGFVCGIISTLGFVYL) threads the bilayer. Topologically, residues 325-345 (TPFLESRLHIQDTCGINNLHG) are cytoplasmic. Residues 346–366 (IPGIIGGIVGAVTAASASLEV) traverse the membrane as a helical segment. Topologically, residues 367-394 (YGKEGLVHSFDFQGFKGDWTARTQGKFQ) are extracellular. The chain crosses the membrane as a helical span at residues 395-415 (IYGLLVTLAMALMGGIIVGLI). The Cytoplasmic portion of the chain corresponds to 416-479 (LRLPFWGQPS…PMASSVPLVP (64 aa)).

This sequence belongs to the ammonium transporter (TC 2.A.49) family. Rh subfamily. In terms of assembly, homotrimer. In terms of processing, N-glycosylated.

It localises to the cell membrane. The protein localises to the apical cell membrane. It carries out the reaction NH4(+)(in) = NH4(+)(out). The enzyme catalyses methylamine(out) = methylamine(in). It catalyses the reaction CO2(out) = CO2(in). In terms of biological role, ammonium transporter involved in the maintenance of acid-base homeostasis. Transports ammonium and its related derivative methylammonium across the plasma membrane of epithelial cells likely contributing to renal transepithelial ammonia transport and ammonia metabolism. Postulated to primarily mediate an electroneutral bidirectional transport of NH3 ammonia species according to a mechanism that implies interaction of an NH4(+) ion with acidic residues of the pore entry followed by dissociation of NH4(+) into NH3 and H(+). As a result NH3 transits through the central pore and is protonated on the extracellular side reforming NH4(+). May act as a CO2 channel providing for renal acid secretion. The polypeptide is Ammonium transporter Rh type C (RHCG) (Pan troglodytes (Chimpanzee)).